We begin with the raw amino-acid sequence, 251 residues long: Aspartate/glutamate leucyltransferase (251 aa).

Belongs to the R-transferase family. Bpt subfamily.

Its subcellular location is the cytoplasm. The enzyme catalyses N-terminal L-glutamyl-[protein] + L-leucyl-tRNA(Leu) = N-terminal L-leucyl-L-glutamyl-[protein] + tRNA(Leu) + H(+). It carries out the reaction N-terminal L-aspartyl-[protein] + L-leucyl-tRNA(Leu) = N-terminal L-leucyl-L-aspartyl-[protein] + tRNA(Leu) + H(+). In terms of biological role, functions in the N-end rule pathway of protein degradation where it conjugates Leu from its aminoacyl-tRNA to the N-termini of proteins containing an N-terminal aspartate or glutamate. This Stenotrophomonas maltophilia (strain R551-3) protein is Aspartate/glutamate leucyltransferase.